A 184-amino-acid polypeptide reads, in one-letter code: ATP synthase subunit b, chloroplastic (184 aa).

The helical transmembrane segment at 27 to 49 (LATNLINLSVVLGVLIFFGKGVL) threads the bilayer.

It belongs to the ATPase B chain family. F-type ATPases have 2 components, F(1) - the catalytic core - and F(0) - the membrane proton channel. F(1) has five subunits: alpha(3), beta(3), gamma(1), delta(1), epsilon(1). F(0) has four main subunits: a(1), b(1), b'(1) and c(10-14). The alpha and beta chains form an alternating ring which encloses part of the gamma chain. F(1) is attached to F(0) by a central stalk formed by the gamma and epsilon chains, while a peripheral stalk is formed by the delta, b and b' chains.

It localises to the plastid. It is found in the chloroplast thylakoid membrane. Its function is as follows. F(1)F(0) ATP synthase produces ATP from ADP in the presence of a proton or sodium gradient. F-type ATPases consist of two structural domains, F(1) containing the extramembraneous catalytic core and F(0) containing the membrane proton channel, linked together by a central stalk and a peripheral stalk. During catalysis, ATP synthesis in the catalytic domain of F(1) is coupled via a rotary mechanism of the central stalk subunits to proton translocation. Component of the F(0) channel, it forms part of the peripheral stalk, linking F(1) to F(0). The sequence is that of ATP synthase subunit b, chloroplastic from Nymphaea alba (White water-lily).